Consider the following 369-residue polypeptide: Tyrosyl-DNA phosphodiesterase 2 (369 aa).

A disordered region spans residues 58–77; that stretch reads EKTEVTGNKRKDDTAEASGT. Positions 59 to 71 are enriched in basic and acidic residues; the sequence is KTEVTGNKRKDDT. An interaction with 5' end of substrate DNA region spans residues 129–133; that stretch reads NVDGL. Residues Asp131 and Glu161 each contribute to the Mg(2+) site. The interval 235 to 240 is interaction with 5' end of substrate DNA; it reads HLESCK. Residue Asp271 is the Proton donor/acceptor of the active site. The tract at residues 273–275 is interaction with 5' end of substrate DNA; sequence NLR.

This sequence belongs to the CCR4/nocturin family. TTRAP/TDP2 subfamily. Mg(2+) is required as a cofactor. The cofactor is Mn(2+). In terms of tissue distribution, expressed ubiquitously during blastula stages and throughout gastrulation. Shortly after shield formation, expressed weakly in dorsal forerunner cells (DFCs). Between somite stages 5 and 9, expressed in the tailbud and around the Kupffer's vesicle at a higher level than the more uniform expression in the embryo.

Its subcellular location is the nucleus. It localises to the PML body. In terms of biological role, DNA repair enzyme that can remove a variety of covalent adducts from DNA through hydrolysis of a 5'-phosphodiester bond, giving rise to DNA with a free 5' phosphate. Catalyzes the hydrolysis of dead-end complexes between DNA and the topoisomerase 2 (top2) active site tyrosine residue. Hydrolyzes 5'-phosphoglycolates on protruding 5' ends on DNA double-strand breaks (DSBs) due to DNA damage by radiation and free radicals. Controls gastrulation movements and left/right (L/R) axis determination via smad3-mediated regulation of cdh1/e-cadherin. Regulates the formation of Kupffer's vesicle, a signaling center essential for establishing L/R asymmetry. Modulates smad3 activity through modulating nodal-acvr1/akt4 signaling. The polypeptide is Tyrosyl-DNA phosphodiesterase 2 (tdp2) (Danio rerio (Zebrafish)).